An 861-amino-acid chain; its full sequence is MAAVIRKLLPFPSPNPKRDNRESDDDDETSSGYRIEYSFASEYKGPLIANVPRALPVEVDQIPTALPVSFSSLRSGISYPVAPLVMTKDTKRPPDSGIEKKNGFVDSAAGSSVVLIGRDVVSGSSSSSSSKRLDVPEEVKSPADFRLSPSSPLSASAREEDHLDDDRVSDVGPRAVRFVEPFQSSECDESSYVSDGESIAATHRAERKGKRGSCYRCQLGNRFTEKEVCIVCDAKYCFNCVRRAMGAMPEGRKCQACIGYRIDESKRASLGKCSRMLKRHLTDSELRQVMNAEITCKANQLPSRLIIVNDKPLSEDELYTLQTCPNPPKKLKPGHYWYDKVAGYWGKIGEKPSQIISPNNSIGGYISEKVSNGDTEIYINGREITKPELTMLKWAGVQCEGKPHFWVDSDGSYREEGQKHPIGNIWSKKRAKIACAVFSLPVPPASSAVEPYDVPLYEQKMLNKLLLIGSEKGGATTIYKQARSLYNVSFSLEDRERIKFIIQTNLYTYLAMVLEAHERFEKEMSNDQSSGNVGDETSAKPGNSINPRLKHFSDWVLKEKEDGNLKIFPPSSRENAQTVADLWRVPAIQATYKRLRDTLPRNAVYFLERILEISRSEYDPSDMDILQAEGLSSMEGLSCVDFSFPSTSQEESLESDYQHDTDMKYQLIRLNPRSLGENWKLLEMFEDADLVIFCVSLTDYAENIEDGEGNIVNKMLATKQLFENMVTHPSLANKRFLLVLTKFDLLEEKIEEVPLRTCEWFEDFNPLISQNQTSRHNPPMAQRAFHYIGYKFKRLYDSILEPVNMRGRSFKPKLFVCQVSLESDTVDNALRYAREILKWHVEETSMFQEMSTTSIEASSSS.

Disordered regions lie at residues 1–32 (MAAVIRKLLPFPSPNPKRDNRESDDDDETSSG) and 121–168 (VSGS…DDRV). Residues 131 to 143 (KRLDVPEEVKSPA) are compositionally biased toward basic and acidic residues. The segment covering 146–156 (RLSPSSPLSAS) has biased composition (low complexity). The span at 157–168 (AREEDHLDDDRV) shows a compositional bias: basic and acidic residues. The short motif at 204-211 (RAERKGKR) is the Nuclear localization signal element. The RING-type; degenerate zinc finger occupies 214–257 (CYRCQLGNRFTEKEVCIVCDAKYCFNCVRRAMGAMPEGRKCQAC). In terms of domain architecture, G-alpha spans 461–853 (MLNKLLLIGS…TSMFQEMSTT (393 aa)). The G1 motif stretch occupies residues 464-477 (KLLLIGSEKGGATT). GTP is bound at residue 469 to 477 (GSEKGGATT). Position 476 (threonine 476) interacts with Ca(2+). The segment at 523 to 545 (EMSNDQSSGNVGDETSAKPGNSI) is disordered. Position 624–632 (624–632 (DILQAEGLS)) interacts with GTP. A G2 motif region spans residues 624-632 (DILQAEGLS). Serine 632 contacts Ca(2+). A G3 motif region spans residues 665 to 674 (YQLIRLNPRS). Residues 737–744 (LLVLTKFD) are G4 motif. 741 to 744 (TKFD) lines the GTP pocket. The tract at residues 818–823 (QVSLES) is G5 motif.

This sequence belongs to the G-alpha family. XLG subfamily. In terms of assembly, interacts with GB1. Component of a G-protein complex at least composed of XLG2 and GB1. Interacts with RTV1. It depends on Ca(2+) as a cofactor. As to expression, ubiquitous. Strongly expressed in vascular tissues, root and shoot meristems and lateral root primordia.

The protein localises to the nucleus. In terms of biological role, guanine nucleotide-binding proteins (G proteins) are involved as modulators or transducers in various transmembrane signaling systems. Binds GTP with specificity. Plays a role in the root morphogenesis by regulation of the cell proliferation. Acts as a positive regulator in resistance to pathogen that triggers the salicylic acid (SA) pathway. Promotes the DNA binding activity of RTV1 specifically to promoter regions of FT and SOC1 in vivo leading to the activation of floral integrator genes. This is Extra-large guanine nucleotide-binding protein 2 (XLG2) from Arabidopsis thaliana (Mouse-ear cress).